The chain runs to 962 residues: MAAQRIRAANASGLPRCKSEGTLIDLSEGFSETSFNDVKVPSPSALLVDNPTPFGNAKEVIAIKDYCPNNFTTLKFSKGDHLYVLDTSGGEWWYAHNTTEMGYIPSSYVQPLNYRNSTLSDSGMIDNLPDSPEEVAKELDLLGGGWTDDQKESGRPYSNNPFWNGVRTNPFLNGNAQPSTDELNPKSTVDLLLFDTGTSSFTESSSATTNSTGNIFDELPATNGLQVEQPVKRDNPFFRSKRSYSLSELSVLQAKSDAPPTSSFFTGLKSPVPEQFQSREDFRTAWLNHRKLARSCHDLDLLGQSPGWGQTQAVETNIVCKLDSSGGSVQLPDTNISIHVPEGHVAPGETQQISMKALLDPPLDLNSDRSTSVSPVVEVKLSNLEVSTFIILEMKVSAEVKGDIFSKSTVVLQCLRSDSKEGPYVPIPLAYSYGDTIQVQLDNLEPCMYLAIVAQGPNILYPSTVWDFINKRVTVGLYGPKHIHPSFKTVVTIFGHDCAPKTLLVSEVTRQAPSPAPVALQLWGKHQFILSRPQDLRVCMFSNMTNYEVKANEQARVVRGFQMKLGKVSRLIFSVISQNPNELSDFTLRVQVKDDQDTILTQFCVQTPQPPPKSAIKPSGQRRFLKKNEVGKIILSPFVVTTKYPTFQDRPVSSLKFGKLLKTVVRQNKSHYLLEYKKGDVVALLSEERIRLKGQLWTKEWYIGYYQGKVGLVHTKNVLVVGKARPSLFSGPELSTSVLLEQILRPCKFLTYIYASVRTLLMENISSWRAFADALGYGNLPLTFFCRAELDSEPERVASVLEKLKEDCNNPDNKDRKSFQKELVMALLKMDCQGLVVRLIQDFVLLTTAVEVAQRWRELAEKLAKVSKQQMDAYESPHRDRNGVVDSEAMWKPAYDFLLTWSHQIGDSYRDVIQELHIGLDKMKNPITRRWKHLTGTLILVNSLDILRAAAFSPADHDDFVI.

The SH3 1 domain occupies 55 to 114; that stretch reads GNAKEVIAIKDYCPNNFTTLKFSKGDHLYVLDTSGGEWWYAHNTTEMGYIPSSYVQPLNY. Phosphoserine occurs at positions 131, 245, 250, 278, and 295. One can recognise a ZU5 domain in the interval 316 to 453; that stretch reads TNIVCKLDSS…LEPCMYLAIV (138 aa). S636 carries the post-translational modification Phosphoserine. One can recognise an SH3 2 domain in the interval 653-723; the sequence is SSLKFGKLLK…HTKNVLVVGK (71 aa).

As to quaternary structure, homodimer or homooligomer. Interacts with DNM2, EPS15, clathrin, the adapter protein complex 2/AP-2 and TFRC. Interacts with the Rag GTPases RRAGA, RRAGB, RRAGC and RRAGD; the interaction is most probably direct, preferentially occurs with their inactive GDP-bound form and is negatively regulated by amino acids. Post-translationally, phosphorylated upon EGF stimulation. Phosphorylation prevents interaction with DNM2.

Its subcellular location is the membrane. It localises to the clathrin-coated pit. The protein localises to the cytoplasmic vesicle. The protein resides in the clathrin-coated vesicle. It is found in the nucleus. Functionally, may function in transferrin receptor internalization at the plasma membrane through a cargo-specific control of clathrin-mediated endocytosis. Alternatively, may act as a negative regulator of the amino acid-induced TOR signaling by inhibiting the formation of active Rag GTPase complexes. Preferentially binds inactive Rag GTPase complexes and prevents their interaction with the mTORC1 complex inhibiting its relocalization to lysosomes and its activation. Thereby, may indirectly regulate cell growth, proliferation and autophagy. This Mus musculus (Mouse) protein is SH3 domain-binding protein 4 (Sh3bp4).